The sequence spans 842 residues: Probable cleavage and polyadenylation specificity factor subunit 2 (842 aa).

The segment covering 414 to 425 has biased composition (basic and acidic residues); it reads AEETRIRMERAR. Disordered stretches follow at residues 414-442 and 708-747; these read AEETRIRMERARRQAQANESDDSDDDDIA and METFQDDQNKQEASEENVAEGEKSNGQSKENDENASSIPI. Residues 432–441 show a composition bias toward acidic residues; the sequence is ESDDSDDDDI. The span at 731–747 shows a compositional bias: polar residues; the sequence is SNGQSKENDENASSIPI.

The protein belongs to the metallo-beta-lactamase superfamily. RNA-metabolizing metallo-beta-lactamase-like family. CPSF2/YSH1 subfamily. As to quaternary structure, CPSF is a heterotetramer composed of four distinct subunits 160, 100, 70 and 30 kDa.

The protein resides in the nucleus. CPSF plays a key role in pre-mRNA 3'-end formation, recognizing the AAUAAA signal sequence and interacting with poly(A)polymerase and other factors to bring about cleavage and poly(A) addition. This is Probable cleavage and polyadenylation specificity factor subunit 2 from Caenorhabditis briggsae.